Reading from the N-terminus, the 495-residue chain is ATP synthase subunit beta, chloroplastic (495 aa).

Position 172–179 (172–179) interacts with ATP; the sequence is GGAGVGKT.

The protein belongs to the ATPase alpha/beta chains family. As to quaternary structure, F-type ATPases have 2 components, CF(1) - the catalytic core - and CF(0) - the membrane proton channel. CF(1) has five subunits: alpha(3), beta(3), gamma(1), delta(1), epsilon(1). CF(0) has four main subunits: a(1), b(1), b'(1) and c(9-12).

Its subcellular location is the plastid. The protein resides in the chloroplast thylakoid membrane. It catalyses the reaction ATP + H2O + 4 H(+)(in) = ADP + phosphate + 5 H(+)(out). Functionally, produces ATP from ADP in the presence of a proton gradient across the membrane. The catalytic sites are hosted primarily by the beta subunits. The chain is ATP synthase subunit beta, chloroplastic from Beaucarnea recurvata (Elephant-foot tree).